The chain runs to 744 residues: Cullin-3 (744 aa).

The Cullin neddylation domain occupies 677 to 736 (MELSAIIVRIMKTEGKLSHQQLLERTTKRTQSRLSLTPSILKRSIQLLIEKEYIQRNADD). Lys-688 is covalently cross-linked (Glycyl lysine isopeptide (Lys-Gly) (interchain with G-Cter in NEDD8)).

It belongs to the cullin family. Component of a ubiquitin-protein ligase complex consisting of the cullin CUL3, the linker protein ELC1, the substrate receptor ELA1, and the RING protein HRT1. In terms of processing, neddylated; enhancing the ubiquitin-ligase activity.

Its pathway is protein modification; protein ubiquitination. As part of the CRL3 E3 ubiquitin ligase complex; polyubiquitylates monoubiquitylated RNA polymerase II subunit RPO21 to trigger its proteolysis; plays a role in global genomic repair. The protein is Cullin-3 (CUL3) of Saccharomyces cerevisiae (strain ATCC 204508 / S288c) (Baker's yeast).